We begin with the raw amino-acid sequence, 1802 residues long: U3 small nucleolar RNA-associated protein 10 (1802 aa).

One copy of the HEAT 1 repeat lies at 581–618; the sequence is MDLQALLPFVLVTLADPSERVRREAAGILTIIGSLHKN. The next 2 membrane-spanning stretches (helical) occupy residues 946–966 and 1002–1022; these read VQSG…AIVN and ALLL…HSVM. HEAT repeat units follow at residues 1046–1083, 1253–1290, 1297–1335, and 1758–1795; these read QTID…AFEH, LSLV…QNPE, TRML…KYGK, and ALLP…VLGE.

It belongs to the HEATR1/UTP10 family. In terms of assembly, component of the ribosomal small subunit (SSU) processome.

The protein localises to the nucleus. It is found in the nucleolus. It localises to the membrane. In terms of biological role, involved in nucleolar processing of pre-18S ribosomal RNA. Involved in ribosome biosynthesis. In Aspergillus oryzae (strain ATCC 42149 / RIB 40) (Yellow koji mold), this protein is U3 small nucleolar RNA-associated protein 10.